Reading from the N-terminus, the 258-residue chain is UPF0246 protein YE0603 (258 aa).

The protein belongs to the UPF0246 family.

The chain is UPF0246 protein YE0603 from Yersinia enterocolitica serotype O:8 / biotype 1B (strain NCTC 13174 / 8081).